The primary structure comprises 277 residues: MELIEKHVSFGGWQNMYRHYSQSLKCEMNVGVYLPPKAANEKLPVLYWLSGLTCNEQNFITKSGMQRYAAEHNIIVVAPDTSPRGSHVADADRYDLGQGAGFYLNATQAPWNEHYKMYDYIRNELPDLVMHHFPATAKKSISGHSMGGLGALVLALRNPDEYVSVSAFSPIVSPSQVPWGQQAFAAYLAENKDAWLDYDPVSLISQGQRVAEIMVDQGLSDDFYAEQLRTPNLEKICQEMNIKTLIRYHEGYDHSYYFVSSFIGEHIAYHANKLNMR.

Active-site charge relay system residues include Ser145, Asp221, and His254.

This sequence belongs to the esterase D family.

The enzyme catalyses S-formylglutathione + H2O = formate + glutathione + H(+). Serine hydrolase involved in the detoxification of formaldehyde. Hydrolyzes S-formylglutathione to glutathione and formate. This Escherichia coli (strain K12 / DH10B) protein is S-formylglutathione hydrolase FrmB (frmB).